Reading from the N-terminus, the 183-residue chain is NEDD8-conjugating enzyme Ubc12 (183 aa).

Met1 is subject to N-acetylmethionine. The segment at 1-28 (MIKLFSLKQQKKEEESAGGTKGSSKKAS) is disordered. Residues 29-173 (AAQLRIQKDI…VQRSMRGGYI (145 aa)) form the UBC core domain. Cys111 functions as the Glycyl thioester intermediate in the catalytic mechanism.

Belongs to the ubiquitin-conjugating enzyme family. UBC12 subfamily. Post-translationally, the acetylation of Met-1 increases affinity for DCUN1D1 by about 2 orders of magnitude and is crucial for NEDD8 transfer to cullins.

The catalysed reaction is [E1 NEDD8-activating enzyme]-S-[NEDD8 protein]-yl-L-cysteine + [E2 NEDD8-conjugating enzyme]-L-cysteine = [E1 NEDD8-activating enzyme]-L-cysteine + [E2 NEDD8-conjugating enzyme]-S-[NEDD8-protein]-yl-L-cysteine.. The protein operates within protein modification; protein neddylation. Its function is as follows. Accepts the ubiquitin-like protein NEDD8 from the UBA3-NAE1 E1 complex and catalyzes its covalent attachment to other proteins. The specific interaction with the E3 ubiquitin ligase rbx1, but not rbx2, suggests that the rbx1-ube2m complex neddylates specific target proteins, such as cul1, cul2, cul3 and cul4. Involved in cell proliferation. The polypeptide is NEDD8-conjugating enzyme Ubc12 (ube2m) (Xenopus tropicalis (Western clawed frog)).